A 384-amino-acid polypeptide reads, in one-letter code: Lipid-A-disaccharide synthase 1 (384 aa).

The protein belongs to the LpxB family.

It catalyses the reaction a lipid X + a UDP-2-N,3-O-bis[(3R)-3-hydroxyacyl]-alpha-D-glucosamine = a lipid A disaccharide + UDP + H(+). Its pathway is bacterial outer membrane biogenesis; LPS lipid A biosynthesis. In terms of biological role, condensation of UDP-2,3-diacylglucosamine and 2,3-diacylglucosamine-1-phosphate to form lipid A disaccharide, a precursor of lipid A, a phosphorylated glycolipid that anchors the lipopolysaccharide to the outer membrane of the cell. The polypeptide is Lipid-A-disaccharide synthase 1 (Legionella pneumophila (strain Paris)).